Here is a 322-residue protein sequence, read N- to C-terminus: Beta-1,3-galactosyltransferase bre-5 (322 aa).

Topologically, residues 1–16 (MFLCVRILKRKYHELS) are cytoplasmic. The chain crosses the membrane as a helical; Signal-anchor for type II membrane protein span at residues 17-37 (SFQKLLIFTITIFLLWVLGVV). Residues 38 to 322 (DKFRETSFGD…YEYSQLNGFE (285 aa)) lie on the Lumenal side of the membrane. Residue Asn-150 is glycosylated (N-linked (GlcNAc...) asparagine).

It belongs to the glycosyltransferase 31 family. Expressed in the gut.

It is found in the golgi apparatus membrane. Its pathway is protein modification; protein glycosylation. Its function is as follows. Transfers N-acetylgalactosamine onto mannose groups of carbohydrate substrates. Required for susceptibility to pore-forming crystal toxins in conjunction with bre-1, bre-2, bre-3, and bre-4. Involved in resistance to the nematotoxic C.cinerea galectin Cgl2. This chain is Beta-1,3-galactosyltransferase bre-5, found in Caenorhabditis elegans.